Consider the following 569-residue polypeptide: Proline--tRNA ligase (569 aa).

This sequence belongs to the class-II aminoacyl-tRNA synthetase family. ProS type 1 subfamily. As to quaternary structure, homodimer.

The protein localises to the cytoplasm. It carries out the reaction tRNA(Pro) + L-proline + ATP = L-prolyl-tRNA(Pro) + AMP + diphosphate. Catalyzes the attachment of proline to tRNA(Pro) in a two-step reaction: proline is first activated by ATP to form Pro-AMP and then transferred to the acceptor end of tRNA(Pro). As ProRS can inadvertently accommodate and process non-cognate amino acids such as alanine and cysteine, to avoid such errors it has two additional distinct editing activities against alanine. One activity is designated as 'pretransfer' editing and involves the tRNA(Pro)-independent hydrolysis of activated Ala-AMP. The other activity is designated 'posttransfer' editing and involves deacylation of mischarged Ala-tRNA(Pro). The misacylated Cys-tRNA(Pro) is not edited by ProRS. This Campylobacter jejuni subsp. doylei (strain ATCC BAA-1458 / RM4099 / 269.97) protein is Proline--tRNA ligase.